The chain runs to 1214 residues: [F-actin]-monooxygenase mical1 (1214 aa).

The tract at residues Met1–Glu488 is monooxygenase domain. FAD contacts are provided by residues Cys96, Glu115–Arg117, Arg122–Asn124, Phe182, Tyr292, and Asp392. Positions Ala484 to Lys505 are disordered. The Calponin-homology (CH) domain maps to Met508–Thr614. The tract at residues His649 to Glu676 is disordered. Positions Asn663–Glu676 are enriched in basic and acidic residues. The LIM zinc-binding domain occupies Glu686–Glu748. Cys688, Cys691, His709, Cys712, Cys715, Cys718, Cys738, and His741 together coordinate Zn(2+). Positions Glu747–Leu1019 are disordered. The span at Pro796–Leu815 shows a compositional bias: acidic residues. Residues Ser828 to Ile841 are compositionally biased toward polar residues. Residues Arg910–Ser922 are compositionally biased toward low complexity. The span at Ser974–Phe987 shows a compositional bias: polar residues. Positions Val1003 to Leu1019 are enriched in acidic residues. The 147-residue stretch at Lys1053–Leu1199 folds into the bMERB domain. Residues His1061 to Glu1131 are a coiled coil. A disordered region spans residues Gln1194–Glu1214.

Belongs to the Mical family. The cofactor is FAD.

It is found in the cytoplasm. It localises to the cytoskeleton. Its subcellular location is the midbody. The protein localises to the endosome membrane. It carries out the reaction L-methionyl-[F-actin] + NADPH + O2 + H(+) = L-methionyl-(R)-S-oxide-[F-actin] + NADP(+) + H2O. The catalysed reaction is NADPH + O2 + H(+) = H2O2 + NADP(+). Monooxygenase that promotes depolymerization of F-actin by mediating oxidation of specific methionine residues on actin to form methionine-sulfoxide, resulting in actin filament disassembly and prevent repolymerization. May be involved in endosomal tubule extension and neosynthesized protein export. The chain is [F-actin]-monooxygenase mical1 (mical1) from Danio rerio (Zebrafish).